A 385-amino-acid polypeptide reads, in one-letter code: Protein-glutamate methylesterase/protein-glutamine glutaminase (385 aa).

Asp-53 is subject to 4-aspartylphosphate. The CheB-type methylesterase domain occupies 196–385; that stretch reads KHKTGKIIVV…EIADHVLRRS (190 aa). Active-site residues include Ser-208, His-234, and Asp-330.

The protein belongs to the CheB family. In terms of processing, phosphorylated by CheA. Phosphorylation of the N-terminal regulatory domain activates the methylesterase activity.

The protein resides in the cytoplasm. It catalyses the reaction [protein]-L-glutamate 5-O-methyl ester + H2O = L-glutamyl-[protein] + methanol + H(+). The catalysed reaction is L-glutaminyl-[protein] + H2O = L-glutamyl-[protein] + NH4(+). Involved in chemotaxis. Part of a chemotaxis signal transduction system that modulates chemotaxis in response to various stimuli. Catalyzes the demethylation of specific methylglutamate residues introduced into the chemoreceptors (methyl-accepting chemotaxis proteins or MCP) by CheR. Also mediates the irreversible deamidation of specific glutamine residues to glutamic acid. The protein is Protein-glutamate methylesterase/protein-glutamine glutaminase of Borreliella burgdorferi (strain ATCC 35210 / DSM 4680 / CIP 102532 / B31) (Borrelia burgdorferi).